The chain runs to 337 residues: Primase homolog protein (337 aa).

The Toprim domain occupies 205-304 (SEIIIVEGEP…WLVKWPKKSE (100 aa)). 3 residues coordinate Mg(2+): Glu211, Asp273, and Asp275.

Requires Mg(2+) as cofactor.

Its function is as follows. May act as a DNA primase. This Arabidopsis thaliana (Mouse-ear cress) protein is Primase homolog protein.